Reading from the N-terminus, the 112-residue chain is Dolichyl-diphosphooligosaccharide--protein glycosyltransferase subunit DAD1 (112 aa).

Over 1–27 (MVELSSVISKFYNDYVQNTPKKLKLVD) the chain is Cytoplasmic. A helical membrane pass occupies residues 28–48 (IYLGYILLTGIIQFVYCCLVG). At 49-51 (TFP) the chain is on the lumenal side. A helical transmembrane segment spans residues 52–72 (FNSFLSGFISTVSCFVLAVCL). Over 73-91 (RLQANPQNKSVFAGISPER) the chain is Cytoplasmic. The helical transmembrane segment at 92-112 (GFADFIFAHVILHLVVMNFIG) threads the bilayer.

It belongs to the DAD/OST2 family. Component of the oligosaccharyltransferase (OST) complex.

The protein resides in the endoplasmic reticulum membrane. Its pathway is protein modification; protein glycosylation. Its function is as follows. Subunit of the oligosaccharyl transferase (OST) complex that catalyzes the initial transfer of a defined glycan (Glc(3)Man(9)GlcNAc(2) in eukaryotes) from the lipid carrier dolichol-pyrophosphate to an asparagine residue within an Asn-X-Ser/Thr consensus motif in nascent polypeptide chains, the first step in protein N-glycosylation. N-glycosylation occurs cotranslationally and the complex associates with the Sec61 complex at the channel-forming translocon complex that mediates protein translocation across the endoplasmic reticulum (ER). All subunits are required for a maximal enzyme activity. Probably as part of the N-glycosylation pathway, plays a role in the regulation of tissue growth and apoptosis. This chain is Dolichyl-diphosphooligosaccharide--protein glycosyltransferase subunit DAD1, found in Drosophila melanogaster (Fruit fly).